We begin with the raw amino-acid sequence, 3953 residues long: Zinc finger protein 469 (3953 aa).

14 disordered regions span residues 1–274 (MPGE…VSFQ), 313–465 (WPEE…MFFN), 512–672 (EWQG…FPFP), 763–784 (GHQRSPGPPGLPSPPAAPRVPA), 869–1383 (ADEE…HSEL), 1400–1461 (PKPS…DLPV), 1575–1610 (LQRSKDTRGAPRELAEAESVGRVELGTGTEPPSQRR), 1703–1864 (SKTG…GASS), 1884–1947 (VSNT…TVEG), 1991–2030 (KTQGQGTANQLQPENGVSPGGTDNHASVNASPKTALTGPT), 2070–2700 (LTAA…TLGP), 2716–2915 (AGET…LSDS), 3001–3036 (EMPAPADDSSSSLGDVSPEPPSLERERCDGGLPGNT), and 3072–3110 (GPSFLDFEGTASSQGPQSRRTEEAAGAGRAQGRGRPAKG). Residues 187–198 (PPSSFTSTNYTS) are compositionally biased toward polar residues. 2 stretches are compositionally biased toward pro residues: residues 202-211 (TPRPPAPGPP) and 324-335 (YPLPTQPAPSPL). Over residues 603-623 (STCSSLSPMSSSPANPSSEES) the composition is skewed to low complexity. Composition is skewed to pro residues over residues 768–780 (PGPPGLPSPPAAP) and 896–911 (KAPPPLPAATPDPQTP). The span at 944-953 (QQRRGKQLKL) shows a compositional bias: basic residues. Gly residues predominate over residues 963–975 (AAEGSGSGGGGRA). A compositionally biased stretch (basic and acidic residues) spans 981–991 (RRNDGLGERPP). Residues 1005-1017 (RADPAPRVPRAAA) are compositionally biased toward low complexity. Composition is skewed to basic residues over residues 1025–1042 (SRRRRLPPRKDPRKRKAR) and 1058–1070 (KNRRHRRLGRRAG). Over residues 1082–1093 (PGAEDRRLREYD) the composition is skewed to basic and acidic residues. The segment covering 1094-1103 (FASESEEDEQ) has biased composition (acidic residues). Basic and acidic residues predominate over residues 1120-1137 (KRKEVELTQGPREDEPQK). Residues 1158-1177 (PGGSRPGPGRSPQARGPSRS) are compositionally biased toward low complexity. A compositionally biased stretch (basic and acidic residues) spans 1213–1229 (EETRPSLDFPQEAKEPE). 2 stretches are compositionally biased toward polar residues: residues 1278-1290 (PKPSGSLANTAPH) and 1333-1350 (NPSSTACPKPSVLSSKIS). Residues 1577–1595 (RSKDTRGAPRELAEAESVG) show a composition bias toward basic and acidic residues. Polar residues-rich tracts occupy residues 1991–2005 (KTQGQGTANQLQPEN) and 2014–2024 (NHASVNASPKT). Positions 2243 to 2262 (DTPKDSTLRIPEDSRKEKLW) are enriched in basic and acidic residues. Over residues 2409-2435 (TAPSSTASDFQSDSPQSHRNASHQTPQ) the composition is skewed to polar residues. The C2H2-type 1 zinc-finger motif lies at 2472–2498 (VTCEVCAASFRSGPGLSRHKARKHRPH). Basic residues predominate over residues 2488 to 2498 (SRHKARKHRPH). Low complexity predominate over residues 2506 to 2521 (SPAALPAQQPLEPLAQ). The span at 2534–2546 (SGKERPNHSRGDP) shows a compositional bias: basic and acidic residues. Low complexity predominate over residues 2565–2574 (PGSPHSQQLH). Residues 2592–2631 (PRPDQAREDELHPKQAEKREGRRWRREPTVDSPSHSEGKS) are compositionally biased toward basic and acidic residues. Residues 2632 to 2642 (NKKRGKLRGRR) show a composition bias toward basic residues. The span at 2664–2676 (PSPAMASYAASPS) shows a compositional bias: low complexity. Basic and acidic residues predominate over residues 2777–2787 (DSSRAHSRSEE). The span at 2805–2816 (TSSSPADSTTSS) shows a compositional bias: low complexity. A compositionally biased stretch (basic residues) spans 2869–2879 (LTRKRNPHVYG). Over residues 3095–3105 (AAGAGRAQGRG) the composition is skewed to low complexity. Residues 3115–3137 (YKCKVCFQRFRSLGELDLHKLAH) form a C2H2-type 2 zinc finger. The disordered stretch occupies residues 3232–3322 (TEPAPKHHRG…PDPWAGGEPL (91 aa)). Over residues 3260-3272 (GEAKKDSPGERAK) the composition is skewed to basic and acidic residues. A compositionally biased stretch (pro residues) spans 3302-3314 (PGPPRTTPSPSPD). C2H2-type zinc fingers lie at residues 3337-3359 (RDCHHCGKRFPKPFKLQRHLAVH) and 3365-3388 (YLCPRCPRVYPEHGELLAHLGGAH). A C2H2-type 5; degenerate zinc finger spans residues 3418-3442 (FACSSCNYTFAKKEQFDRHMNKHLR). Disordered stretches follow at residues 3448 to 3501 (FAFR…PILS), 3518 to 3559 (STTK…SPFP), and 3576 to 3925 (ERPE…HRTA). Residues 3584–3602 (PGSPGPLLQQALPLGASLP) are compositionally biased toward low complexity. A compositionally biased stretch (basic and acidic residues) spans 3633–3651 (CAPDHFQEDHLLQKEKEVS). 2 stretches are compositionally biased toward low complexity: residues 3728–3741 (PGPSSQGSGSPRPG) and 3749–3759 (QPQPASGQLQS). Composition is skewed to basic and acidic residues over residues 3876–3892 (EQRKAEPGHTQRKDRLG) and 3915–3925 (EPAEPHTHRTA).

This sequence belongs to the krueppel C2H2-type zinc-finger protein family. Detected in cornea, sclera, skin fibroblasts and striated muscle.

The protein resides in the nucleus. May be involved in transcriptional regulation. The protein is Zinc finger protein 469 (ZNF469) of Homo sapiens (Human).